The primary structure comprises 151 residues: UPF0208 membrane protein PC1_2779 (151 aa).

Helical transmembrane passes span 46 to 66 (FGIR…IALG) and 69 to 89 (LGPA…GLWW).

Belongs to the UPF0208 family.

Its subcellular location is the cell inner membrane. The protein is UPF0208 membrane protein PC1_2779 of Pectobacterium carotovorum subsp. carotovorum (strain PC1).